The following is a 607-amino-acid chain: Siderophore iron transporter mirC (607 aa).

12 helical membrane passes run Leu-67–Met-89, Val-129–Ile-148, Ser-186–Gly-208, Trp-223–Leu-245, Ile-279–Asn-301, Ile-311–Trp-328, Thr-349–Val-368, Gly-388–Lys-410, Val-417–Tyr-436, Val-446–Val-468, Thr-481–Trp-503, and Leu-557–Leu-574. The span at Ser-584–Ser-593 shows a compositional bias: basic and acidic residues. The segment at Ser-584–Thr-607 is disordered.

The protein belongs to the major facilitator superfamily.

It localises to the membrane. The sequence is that of Siderophore iron transporter mirC (mirC) from Emericella nidulans (strain FGSC A4 / ATCC 38163 / CBS 112.46 / NRRL 194 / M139) (Aspergillus nidulans).